We begin with the raw amino-acid sequence, 78 residues long: UPF0270 protein YE3952 (78 aa).

Belongs to the UPF0270 family.

In Yersinia enterocolitica serotype O:8 / biotype 1B (strain NCTC 13174 / 8081), this protein is UPF0270 protein YE3952.